The following is a 95-amino-acid chain: MRCTTLIMVSFVVSCLLLSLVEESEAGAPPVECWSEILFSGKCGFHGKKKCYKEMESKLKQRVLKCRCEDVKKDSNTSKDEHYCGCQRENPYECN.

The first 26 residues, 1-26 (MRCTTLIMVSFVVSCLLLSLVEESEA), serve as a signal peptide directing secretion. 4 cysteine pairs are disulfide-bonded: C33–C94, C43–C68, C51–C84, and C66–C86.

Belongs to the DEFL family. Flower buds.

It localises to the secreted. The sequence is that of Defensin-like protein 232 (SCRL23) from Arabidopsis thaliana (Mouse-ear cress).